We begin with the raw amino-acid sequence, 1745 residues long: Tight junction protein 1 (1745 aa).

The 88-residue stretch at 23 to 110 (TVTLHRAPGF…NAKITIRRKK (88 aa)) folds into the PDZ 1 domain. Positions 102–112 (AKITIRRKKKV) are enriched in basic residues. A disordered region spans residues 102-189 (AKITIRRKKK…QPAKPTKVTL (88 aa)). Acidic residues predominate over residues 123 to 136 (PVSDNEDDSYDEEV). Phosphoserine is present on S125. At Y132 the chain carries Phosphotyrosine. The segment covering 149 to 175 (RRSEKSWARDRSASRERSLSPRSDRRS) has biased composition (basic and acidic residues). S175, S178, and S179 each carry phosphoserine. Position 185 is a phosphothreonine (T185). The region spanning 186–264 (KVTLVKSRKN…KLKMVVQRDE (79 aa)) is the PDZ 2 domain. Phosphoserine occurs at positions 212 and 241. T267 carries the phosphothreonine modification. Residues S275, S277, S280, S284, S290, S294, S297, S300, S323, S329, S334, S337, and S353 each carry the phosphoserine modification. Residues 296–364 (ASDHSGRSHD…PVKHVDDHPP (69 aa)) are disordered. A compositionally biased stretch (basic and acidic residues) spans 299–308 (HSGRSHDRPP). A compositionally biased stretch (polar residues) spans 325 to 338 (HSTQSPQQPSNGSL). Residue T354 is modified to Phosphothreonine. In terms of domain architecture, PDZ 3 spans 421 to 502 (SMKLVKFRKG…GEEVTILAQK (82 aa)). The SH3 domain maps to 516–584 (GDSFYIRTHF…PNKNRAEQLA (69 aa)). The Guanylate kinase-like domain maps to 610–791 (SKRNLRKSRE…WYGALKEAIQ (182 aa)). 2 positions are modified to phosphoserine: S617 and S622. The interval 633–876 (YERVVLREAG…GTPPESAITR (244 aa)) is occludin (OCLN)-binding region. T809 carries the phosphothreonine modification. S810 and S821 each carry phosphoserine. At Y822 the chain carries Phosphotyrosine. A phosphoserine mark is found at S824, S828, and S837. Disordered regions lie at residues 825-944 (APGS…SASA) and 956-1042 (LEEP…YEPQ). Phosphothreonine is present on residues T846, T848, T854, T861, and T868. Positions 879 to 892 (EPVREDSSGMHHEN) are enriched in basic and acidic residues. Over residues 893-906 (QTYPPYSPQAQPQA) the composition is skewed to low complexity. S912 carries the phosphoserine modification. Over residues 998-1014 (DPAKVYRKEPYSEEMMR) the composition is skewed to basic and acidic residues. The residue at position 1071 (S1071) is a Phosphoserine. Residues 1090-1586 (QWSYYDDKQP…STQPPEFDSG (497 aa)) form a disordered region. Residues 1106–1124 (ENQHPRDLDSRQHPEEASE) show a composition bias toward basic and acidic residues. The residue at position 1138 (S1138) is a Phosphoserine. 2 positions are modified to phosphotyrosine: Y1139 and Y1164. The segment at 1150-1370 (RTSTLRHEEQ…FDRRSFESKP (221 aa)) is actin-binding region (ABR). Basic and acidic residues-rich tracts occupy residues 1268–1285 (KMFE…KDVN) and 1335–1346 (PPEDIVRSNHYD). Y1353 bears the Phosphotyrosine mark. The residue at position 1365 (S1365) is a Phosphoserine. A compositionally biased stretch (low complexity) spans 1388 to 1399 (SQSQPNFSSYSS). The span at 1401-1418 (GKPETDAVDRSFSEKRYD) shows a compositional bias: basic and acidic residues. Residue S1411 is modified to Phosphoserine. Positions 1431-1445 (SQYSQPAPPLSSSSL) are enriched in low complexity. Composition is skewed to polar residues over residues 1455-1468 (EGNS…NSYM) and 1510-1519 (AEQTQKTITP). Basic and acidic residues predominate over residues 1535–1544 (PFERKFESPK). S1542 is subject to Phosphoserine. Polar residues predominate over residues 1561 to 1580 (SSKTPTSPKTLMKAHSSTQP). Phosphoserine is present on S1614. A ZU5 domain is found at 1631 to 1745 (ATARGIFNSN…NCVSVLIDHF (115 aa)).

It belongs to the MAGUK family. As to quaternary structure, homodimer. Forms heterodimers TJP3. Forms a heterodimer (via PDZ2 domain) with TJP2/ZO2 (via PDZ2 domain). Interacts with OCLN, CALM, claudins, CGN/cingulin, CXADR, GJD3 and UBN1. Interacts (via ZU5 domain) with CDC42BPB. Interacts (via PDZ domain) with GJA1. Interacts (via PDZ domains) with ANKRD2. Interacts with POPDC1 (via the C-terminus cytoplasmic tail). Interacts with GJA12 and KIRREL1. Interacts with HSPA4. Interacts (via ZU5 domain) with MYZAP. Interacts with DLL1. Interacts with USP53 (via the C-terminal region). Interacts with DNMBP (via C-terminal domain); required for the apical cell-cell junction localization of DNMBP. Interacts with SPEF1. Interacts (via N-terminus) with CTNNA1. Interacts with CLDN18. Interacts with CLDN16 (via TRV motif); this is a prerequisite for anchoring of CLDN16 at the tight junction. Interacts with PKP1; the interaction facilitates TJP1/ZO-1 localization to the plasma membrane. Interacts with PATJ (via PDZ1-6 domains); the interaction is required for attachment and extension of TJP1/ZO1 condensates along the apical cell interface. Post-translationally, phosphorylated at tyrosine redidues in response to epidermal growth factor (EGF). This response is dependent on an intact actin microfilament system. Dephosphorylated by PTPRJ. In terms of tissue distribution, expressed between ameloblasts, at ameloblast-ameloblast junctions and in the stratum intermedium during pre-secretory and secretory stages of tooth development (at protein level).

Its subcellular location is the cell membrane. The protein resides in the cell junction. It localises to the tight junction. The protein localises to the gap junction. It is found in the cytoplasm. Its subcellular location is the myofibril. The protein resides in the sarcomere. It localises to the i band. In terms of biological role, tjp1, TjpP2, and Tjp3 are closely related scaffolding proteins that link tight junction (TJ) transmembrane proteins such as claudins, junctional adhesion molecules, and occludin to the actin cytoskeleton. Forms a multistranded TJP1/ZO1 condensate which elongates to form a tight junction belt, the belt is anchored at the apical cell membrane via interaction with PATJ. The tight junction acts to limit movement of substances through the paracellular space and as a boundary between the compositionally distinct apical and basolateral plasma membrane domains of epithelial and endothelial cells. Necessary for lumenogenesis, and particularly efficient epithelial polarization and barrier formation. Plays a role in the regulation of cell migration by targeting Cdc42bpb to the leading edge of migrating cells. Plays an important role in podosome formation and associated function, thus regulating cell adhesion and matrix remodeling. With Tjp2 and TJjp3, participates in the junctional retention and stability of the transcription factor Dbpa, but is not involved in its shuttling to the nucleus. May play a role in mediating cell morphology changes during ameloblast differentiation via its role in tight junctions. The protein is Tight junction protein 1 of Mus musculus (Mouse).